Consider the following 364-residue polypeptide: Aminomethyltransferase (364 aa).

Belongs to the GcvT family. As to quaternary structure, the glycine cleavage system is composed of four proteins: P, T, L and H.

It carries out the reaction N(6)-[(R)-S(8)-aminomethyldihydrolipoyl]-L-lysyl-[protein] + (6S)-5,6,7,8-tetrahydrofolate = N(6)-[(R)-dihydrolipoyl]-L-lysyl-[protein] + (6R)-5,10-methylene-5,6,7,8-tetrahydrofolate + NH4(+). The glycine cleavage system catalyzes the degradation of glycine. This is Aminomethyltransferase from Photorhabdus laumondii subsp. laumondii (strain DSM 15139 / CIP 105565 / TT01) (Photorhabdus luminescens subsp. laumondii).